Reading from the N-terminus, the 294-residue chain is Shell matrix protein (294 aa).

In terms of tissue distribution, component of the organic matrix of calcified shell layers like nacre and prisms.

It is found in the secreted. In Mytilus californianus (California mussel), this protein is Shell matrix protein.